The sequence spans 94 residues: Co-chaperonin GroES (94 aa).

This sequence belongs to the GroES chaperonin family. In terms of assembly, heptamer of 7 subunits arranged in a ring. Interacts with the chaperonin GroEL.

The protein resides in the cytoplasm. Its function is as follows. Together with the chaperonin GroEL, plays an essential role in assisting protein folding. The GroEL-GroES system forms a nano-cage that allows encapsulation of the non-native substrate proteins and provides a physical environment optimized to promote and accelerate protein folding. GroES binds to the apical surface of the GroEL ring, thereby capping the opening of the GroEL channel. This chain is Co-chaperonin GroES, found in Clostridium botulinum (strain Alaska E43 / Type E3).